The chain runs to 469 residues: Light-independent protochlorophyllide reductase subunit N (469 aa).

Residues cysteine 24, cysteine 49, and cysteine 109 each coordinate [4Fe-4S] cluster.

Belongs to the BchN/ChlN family. In terms of assembly, protochlorophyllide reductase is composed of three subunits; ChlL, ChlN and ChlB. Forms a heterotetramer of two ChlB and two ChlN subunits. [4Fe-4S] cluster is required as a cofactor.

The enzyme catalyses chlorophyllide a + oxidized 2[4Fe-4S]-[ferredoxin] + 2 ADP + 2 phosphate = protochlorophyllide a + reduced 2[4Fe-4S]-[ferredoxin] + 2 ATP + 2 H2O. It functions in the pathway porphyrin-containing compound metabolism; chlorophyll biosynthesis (light-independent). Functionally, component of the dark-operative protochlorophyllide reductase (DPOR) that uses Mg-ATP and reduced ferredoxin to reduce ring D of protochlorophyllide (Pchlide) to form chlorophyllide a (Chlide). This reaction is light-independent. The NB-protein (ChlN-ChlB) is the catalytic component of the complex. This is Light-independent protochlorophyllide reductase subunit N from Gloeobacter violaceus (strain ATCC 29082 / PCC 7421).